The following is a 1263-amino-acid chain: DNA-directed RNA polymerase subunit beta (1263 aa).

Belongs to the RNA polymerase beta chain family. The RNAP catalytic core consists of 2 alpha, 1 beta, 1 beta' and 1 omega subunit. When a sigma factor is associated with the core the holoenzyme is formed, which can initiate transcription.

The enzyme catalyses RNA(n) + a ribonucleoside 5'-triphosphate = RNA(n+1) + diphosphate. DNA-dependent RNA polymerase catalyzes the transcription of DNA into RNA using the four ribonucleoside triphosphates as substrates. This chain is DNA-directed RNA polymerase subunit beta, found in Thermotoga sp. (strain RQ2).